Reading from the N-terminus, the 288-residue chain is Cell division protein ZipA (288 aa).

Met1 is a topological domain (periplasmic). A helical membrane pass occupies residues 2 to 22 (EIGLREWLIVIGIIVIAGILF). The Cytoplasmic portion of the chain corresponds to 23 to 288 (DGWRRMRGGK…FERRALTQKR (266 aa)). 2 stretches are compositionally biased toward basic and acidic residues: residues 66-75 (KEPQLDEHDL) and 83-93 (REAREPRESGS). The disordered stretch occupies residues 66–141 (KEPQLDEHDL…AKSSPAVADK (76 aa)). Residues 106-117 (GDLNLDLDLDGG) are compositionally biased toward low complexity.

It belongs to the ZipA family. Interacts with FtsZ via their C-terminal domains.

It localises to the cell inner membrane. Essential cell division protein that stabilizes the FtsZ protofilaments by cross-linking them and that serves as a cytoplasmic membrane anchor for the Z ring. Also required for the recruitment to the septal ring of downstream cell division proteins. This Pseudomonas fluorescens (strain Pf0-1) protein is Cell division protein ZipA.